The following is a 101-amino-acid chain: Apolipoprotein C-III (101 aa).

The first 20 residues, 1 to 20 (MQPRMLLIVALVALLASARA), serve as a signal peptide directing secretion. Methionine 64 is modified (methionine sulfoxide). Positions 69–101 (KSLKGYWSKFTDKFTGLWESGPEDQLTTPTLEP) are lipid-binding. Threonine 96 carries an O-linked (GalNAc...) threonine glycan.

The protein belongs to the apolipoprotein C3 family. Post-translationally, the most abundant glycoforms are characterized by an O-linked disaccharide galactose linked to N-acetylgalactosamine (Gal-GalNAc), further modified with up to 3 sialic acid residues. Less abundant glycoforms are characterized by more complex and fucosylated glycan moieties. O-glycosylated on Thr-96 with a core 1 or possibly core 8 glycan. In terms of tissue distribution, synthesized predominantly in liver and to a lesser degree in intestine.

The protein localises to the secreted. Functionally, component of triglyceride-rich very low density lipoproteins (VLDL) and high density lipoproteins (HDL) in plasma. Plays a multifaceted role in triglyceride homeostasis. Intracellularly, promotes hepatic very low density lipoprotein 1 (VLDL1) assembly and secretion; extracellularly, attenuates hydrolysis and clearance of triglyceride-rich lipoproteins (TRLs). Impairs the lipolysis of TRLs by inhibiting lipoprotein lipase and the hepatic uptake of TRLs by remnant receptors. Formed of several curved helices connected via semiflexible hinges, so that it can wrap tightly around the curved micelle surface and easily adapt to the different diameters of its natural binding partners. The chain is Apolipoprotein C-III (Apoc3) from Rattus norvegicus (Rat).